We begin with the raw amino-acid sequence, 201 residues long: Putative ankyrin repeat protein R868 (201 aa).

ANK repeat units lie at residues 125-154 (YENNALNWASKYGFLEIVKLIMENKINCYF) and 156-188 (KAKKAYQLAITYGHTDVVDFLKTYVNTNSDYNF).

In Acanthamoeba polyphaga (Amoeba), this protein is Putative ankyrin repeat protein R868.